Consider the following 320-residue polypeptide: Protoheme IX farnesyltransferase (320 aa).

The next 9 membrane-spanning stretches (helical) occupy residues 38-58 (VIEL…RGFP), 60-80 (IGLI…AGVF), 109-129 (EALV…WFGA), 132-152 (LSAW…TMIL), 159-179 (NIVW…AAVT), 184-204 (WPAI…YWPL), 222-242 (AIAG…AMVA), 254-276 (GWVY…HALY), and 299-319 (YLTL…AIVG).

The protein belongs to the UbiA prenyltransferase family. Protoheme IX farnesyltransferase subfamily.

The protein localises to the cell membrane. It catalyses the reaction heme b + (2E,6E)-farnesyl diphosphate + H2O = Fe(II)-heme o + diphosphate. The protein operates within porphyrin-containing compound metabolism; heme O biosynthesis; heme O from protoheme: step 1/1. Its function is as follows. Converts heme B (protoheme IX) to heme O by substitution of the vinyl group on carbon 2 of heme B porphyrin ring with a hydroxyethyl farnesyl side group. The protein is Protoheme IX farnesyltransferase of Paenarthrobacter aurescens (strain TC1).